The primary structure comprises 126 residues: MARIAGVDLPRDKRVEIGLTYIYGIGLTRSQHILAETGVNPDTRIRELTDADISALRTAVEAYQVEGDLRRLENMNIKRLQDIGCYRGRRHRMGLPVRGQRTRTNARTRRGGRRTVAGKKKAPAKK.

The segment at 92 to 126 (RMGLPVRGQRTRTNARTRRGGRRTVAGKKKAPAKK) is disordered. Residues 100-126 (QRTRTNARTRRGGRRTVAGKKKAPAKK) show a composition bias toward basic residues.

Belongs to the universal ribosomal protein uS13 family. Part of the 30S ribosomal subunit. Forms a loose heterodimer with protein S19. Forms two bridges to the 50S subunit in the 70S ribosome.

Located at the top of the head of the 30S subunit, it contacts several helices of the 16S rRNA. In the 70S ribosome it contacts the 23S rRNA (bridge B1a) and protein L5 of the 50S subunit (bridge B1b), connecting the 2 subunits; these bridges are implicated in subunit movement. Contacts the tRNAs in the A and P-sites. The chain is Small ribosomal subunit protein uS13 from Cyanothece sp. (strain PCC 7425 / ATCC 29141).